The primary structure comprises 394 residues: Enoyl-[acyl-carrier-protein] reductase [NADH] (394 aa).

NAD(+)-binding positions include 48–53 (GASTGY), 74–75 (YE), 111–112 (DA), and 139–140 (LA). Position 225 (tyrosine 225) interacts with substrate. Tyrosine 235 acts as the Proton donor in catalysis. NAD(+) is bound by residues lysine 244 and 273–275 (LVT).

It belongs to the TER reductase family. As to quaternary structure, monomer.

The catalysed reaction is a 2,3-saturated acyl-[ACP] + NAD(+) = a (2E)-enoyl-[ACP] + NADH + H(+). It participates in lipid metabolism; fatty acid biosynthesis. In terms of biological role, involved in the final reduction of the elongation cycle of fatty acid synthesis (FAS II). Catalyzes the reduction of a carbon-carbon double bond in an enoyl moiety that is covalently linked to an acyl carrier protein (ACP). The chain is Enoyl-[acyl-carrier-protein] reductase [NADH] from Opitutus terrae (strain DSM 11246 / JCM 15787 / PB90-1).